A 418-amino-acid chain; its full sequence is UDP-N-acetylglucosamine 1-carboxyvinyltransferase (418 aa).

A phosphoenolpyruvate-binding site is contributed by 22–23 (KN). Position 92 (Arg-92) interacts with UDP-N-acetyl-alpha-D-glucosamine. Catalysis depends on Cys-116, which acts as the Proton donor. At Cys-116 the chain carries 2-(S-cysteinyl)pyruvic acid O-phosphothioketal. UDP-N-acetyl-alpha-D-glucosamine-binding positions include 121-125 (RPIDL), Asp-305, and Leu-327.

This sequence belongs to the EPSP synthase family. MurA subfamily.

Its subcellular location is the cytoplasm. The enzyme catalyses phosphoenolpyruvate + UDP-N-acetyl-alpha-D-glucosamine = UDP-N-acetyl-3-O-(1-carboxyvinyl)-alpha-D-glucosamine + phosphate. Its pathway is cell wall biogenesis; peptidoglycan biosynthesis. In terms of biological role, cell wall formation. Adds enolpyruvyl to UDP-N-acetylglucosamine. In Campylobacter jejuni subsp. doylei (strain ATCC BAA-1458 / RM4099 / 269.97), this protein is UDP-N-acetylglucosamine 1-carboxyvinyltransferase.